We begin with the raw amino-acid sequence, 318 residues long: Ribonuclease Z (318 aa).

Residues His62, His64, Asp66, His67, His140, Asp211, and His269 each coordinate Zn(2+). Asp66 serves as the catalytic Proton acceptor.

Belongs to the RNase Z family. Homodimer. Zn(2+) is required as a cofactor.

The catalysed reaction is Endonucleolytic cleavage of RNA, removing extra 3' nucleotides from tRNA precursor, generating 3' termini of tRNAs. A 3'-hydroxy group is left at the tRNA terminus and a 5'-phosphoryl group is left at the trailer molecule.. In terms of biological role, zinc phosphodiesterase, which displays some tRNA 3'-processing endonuclease activity. Probably involved in tRNA maturation, by removing a 3'-trailer from precursor tRNA. The chain is Ribonuclease Z from Brevibacillus brevis (strain 47 / JCM 6285 / NBRC 100599).